The sequence spans 90 residues: Antitoxin epsilon 2 (90 aa).

It belongs to the epsilon antitoxin family. In the presence of the zeta toxin, forms an inactive PezA(2)PezT(2) heterotetramer.

Functionally, antitoxin component of a type II toxin-antitoxin (TA) system. Neutralizes the toxic effect of zeta toxin. Part of a postsegregational killing (PSK) system involved in the killing of plasmid-free cells. Continuous synthesis of the epsilon antitoxin is required to counteract the zeta toxin. The chain is Antitoxin epsilon 2 from Enterococcus faecalis (Streptococcus faecalis).